Here is a 318-residue protein sequence, read N- to C-terminus: Oncosphere antigen A (318 aa).

3 Fibronectin type-III domains span residues 6–103, 109–207, and 211–308; these read IPQN…TPLP, KPSF…ISRA, and VPQN…TPSV.

The chain is Oncosphere antigen A (ONCA) from Hydatigena taeniaeformis (Feline tapeworm).